The following is a 795-amino-acid chain: Volume-regulated anion channel subunit LRRC8E (795 aa).

Topologically, residues 1 to 22 (MIPVAEFKQFTEQQPAFKVLKP) are cytoplasmic. Residues 23-43 (WWDVLAEYLTVAMLMIGVFGC) traverse the membrane as a helical segment. Over 44–116 (TLQVTQDKII…YETALHWYAK (73 aa)) the chain is Extracellular. A disulfide bridge links Cys54 with Cys300. A glycan (N-linked (GlcNAc...) asparagine) is linked at Asn63. Residues 117-137 (YFPYLVVIHTLIFMVCTSFWF) traverse the membrane as a helical segment. The Cytoplasmic portion of the chain corresponds to 138-264 (KFPGTSSKIE…IRQTVLKVCK (127 aa)). Residues 265–285 (FFAILVYNLIYVEKISFLVAC) traverse the membrane as a helical segment. The Extracellular portion of the chain corresponds to 286–312 (RVETSEITGYASFCCNHTKAHLFSKLA). N-linked (GlcNAc...) asparagine glycosylation occurs at Asn301. Residues 313–333 (FCYISFVCVYGITCLYTLYWL) traverse the membrane as a helical segment. The Cytoplasmic portion of the chain corresponds to 334-795 (FHRPLKEYSF…AEVREKMEEE (462 aa)). LRR repeat units follow at residues 535-556 (QLKVLSLRSNAGKVPASVTDVA), 558-578 (HLQRLSLHNDGARLLALNSLK), 582-603 (VLRELELVACGLERIPHAIFSL), 605-626 (ALQELDLKDNHLRSIEEILSFQ), 630-651 (KLVTLRLWHNQIAYVPEHVRKL), 653-674 (SLEQLYLSHNKLETLPTQLGQC), 676-697 (GLRLLDLSHNGLRSLPPELGLL), 699-720 (SLQHLALSYNALESLPDELFFC), 722-744 (KLRTLLLGYNHLTQLSPDVAALQ), and 745-766 (ALSRLELKGNRLETLPEELGDC).

Belongs to the LRRC8 family. As to quaternary structure, heterohexamer; oligomerizes with other LRRC8 proteins (LRRC8A, LRRC8C, LRRC8D and/or LRRC8B) to form a heterohexamer. In vivo, the subunit composition may depend primarily on expression levels, and heterooligomeric channels containing various proportions of the different LRRC8 proteins may coexist.

Its subcellular location is the cell membrane. The protein resides in the endoplasmic reticulum membrane. It is found in the lysosome membrane. It catalyses the reaction chloride(in) = chloride(out). The catalysed reaction is iodide(out) = iodide(in). It carries out the reaction taurine(out) = taurine(in). The enzyme catalyses 2',3'-cGAMP(out) = 2',3'-cGAMP(in). In terms of biological role, non-essential component of the volume-regulated anion channel (VRAC, also named VSOAC channel), an anion channel required to maintain a constant cell volume in response to extracellular or intracellular osmotic changes. The VRAC channel conducts iodide better than chloride and can also conduct organic osmolytes like taurine. Mediates efflux of amino acids, such as aspartate, in response to osmotic stress. The VRAC channel also mediates transport of immunoreactive cyclic dinucleotide GMP-AMP (2'-3'-cGAMP), an immune messenger produced in response to DNA virus in the cytosol. Channel activity requires LRRC8A plus at least one other family member (LRRC8B, LRRC8C, LRRC8D or LRRC8E); channel characteristics depend on the precise subunit composition. Also plays a role in lysosome homeostasis by forming functional lysosomal VRAC channels in response to low cytoplasmic ionic strength condition: lysosomal VRAC channels are necessary for the formation of large lysosome-derived vacuoles, which store and then expel excess water to maintain cytosolic water homeostasis. In Mus musculus (Mouse), this protein is Volume-regulated anion channel subunit LRRC8E.